The following is a 73-amino-acid chain: U-scoloptoxin(22)-Cw1a (73 aa).

A signal peptide spans 1-24; sequence MRRFVFLAFVLVLFVIANLDSSSA.

This sequence belongs to the scoloptoxin-22 family. In terms of processing, contains 1 disulfide bond. As to expression, expressed by the venom gland.

Its subcellular location is the secreted. The polypeptide is U-scoloptoxin(22)-Cw1a (Cormocephalus westwoodi (Westwood's green centipede)).